The primary structure comprises 229 residues: Large ribosomal subunit protein uL1 (229 aa).

Belongs to the universal ribosomal protein uL1 family. As to quaternary structure, part of the 50S ribosomal subunit.

Its function is as follows. Binds directly to 23S rRNA. The L1 stalk is quite mobile in the ribosome, and is involved in E site tRNA release. In terms of biological role, protein L1 is also a translational repressor protein, it controls the translation of the L11 operon by binding to its mRNA. This Histophilus somni (strain 2336) (Haemophilus somnus) protein is Large ribosomal subunit protein uL1.